Consider the following 205-residue polypeptide: Ephrin-A1 (205 aa).

The N-terminal stretch at 1–18 is a signal peptide; the sequence is MEFLWAPLLGLCCSLAAA. An Ephrin RBD domain is found at 19–151; the sequence is DRHTVFWNSS…KLKVTVSGKI (133 aa). An N-linked (GlcNAc...) asparagine glycan is attached at Asn26. Disulfide bonds link Cys51–Cys92 and Cys80–Cys140. The GPI-anchor amidated serine moiety is linked to residue Ser182. A propeptide spans 183–205 (removed in mature form); it reads AAPRLSPLAWAVLLLPFLLLQTS.

The protein belongs to the ephrin family. Monomer. Homodimer. Forms heterodimers with EPHA2. Binds to the receptor tyrosine kinases EPHA2, EPHA3, EPHA4, EPHA5, EPHA6 and EPHA7. Also binds with low affinity to EPHA1. In terms of processing, undergoes proteolysis by a metalloprotease to give rise to a soluble monomeric form. Post-translationally, N-Glycosylation is required for binding to EPHA2 receptor and inducing its internalization.

It localises to the cell membrane. Its subcellular location is the secreted. Its function is as follows. Cell surface GPI-bound ligand for Eph receptors, a family of receptor tyrosine kinases which are crucial for migration, repulsion and adhesion during neuronal, vascular and epithelial development. Binds promiscuously Eph receptors residing on adjacent cells, leading to contact-dependent bidirectional signaling into neighboring cells. Plays an important role in angiogenesis and tumor neovascularization. The recruitment of VAV2, VAV3 and PI3-kinase p85 subunit by phosphorylated EPHA2 is critical for EFNA1-induced RAC1 GTPase activation and vascular endothelial cell migration and assembly. Exerts anti-oncogenic effects in tumor cells through activation and down-regulation of EPHA2. Activates EPHA2 by inducing tyrosine phosphorylation which leads to its internalization and degradation. Acts as a negative regulator in the tumorigenesis of gliomas by down-regulating EPHA2 and FAK. Can evoke collapse of embryonic neuronal growth cone and regulates dendritic spine morphogenesis. The sequence is that of Ephrin-A1 (EFNA1) from Sus scrofa (Pig).